Consider the following 210-residue polypeptide: Protein GET1 (210 aa).

Residues 1-4 are Lumenal-facing; that stretch reads MPSL. The chain crosses the membrane as a helical span at residues 5 to 24; sequence LIIVLIIHVVTYLINTIGAN. The Cytoplasmic segment spans residues 25 to 110; sequence TIDSLLWLLY…SFDLAVKSVR (86 aa). Positions 39–95 form a coiled coil; the sequence is NQTSQTADEQRRLKREVMQLKREMNATSSQDEFAKWAKLRRRHDKTMEEYEAKNKAL. The helical transmembrane segment at 111-131 threads the bilayer; the sequence is FFSTTGLKLFLQFWFSKTPIF. Residues 132 to 155 are Lumenal-facing; the sequence is ELPRGWIPWQVEWVLSFPRAPLGT. Residues 156–172 traverse the membrane as a helical segment; it reads VSIQIWGGVCATVVSLA. Residues 173–210 are Cytoplasmic-facing; it reads GDAIGVVNVYLTSKAPKQKEPATSGENSARPMAIKKEL. A disordered region spans residues 189–210; it reads KQKEPATSGENSARPMAIKKEL.

This sequence belongs to the WRB/GET1 family. In terms of assembly, interacts with GET3.

It localises to the endoplasmic reticulum membrane. Its function is as follows. Required for the post-translational delivery of tail-anchored (TA) proteins to the endoplasmic reticulum. Acts as a membrane receptor for soluble GET3, which recognizes and selectively binds the transmembrane domain of TA proteins in the cytosol. In Coccidioides posadasii (strain C735) (Valley fever fungus), this protein is Protein GET1.